The sequence spans 87 residues: Small ribosomal subunit protein bS20 (87 aa).

The disordered stretch occupies residues 1-28; sequence MANIKSQQKRNRTNERARLRNKSVKSSL.

The protein belongs to the bacterial ribosomal protein bS20 family.

Functionally, binds directly to 16S ribosomal RNA. The sequence is that of Small ribosomal subunit protein bS20 from Mycobacterium marinum (strain ATCC BAA-535 / M).